Reading from the N-terminus, the 352-residue chain is S-adenosylmethionine:tRNA ribosyltransferase-isomerase (352 aa).

Belongs to the QueA family. As to quaternary structure, monomer.

The protein localises to the cytoplasm. It carries out the reaction 7-aminomethyl-7-carbaguanosine(34) in tRNA + S-adenosyl-L-methionine = epoxyqueuosine(34) in tRNA + adenine + L-methionine + 2 H(+). It participates in tRNA modification; tRNA-queuosine biosynthesis. In terms of biological role, transfers and isomerizes the ribose moiety from AdoMet to the 7-aminomethyl group of 7-deazaguanine (preQ1-tRNA) to give epoxyqueuosine (oQ-tRNA). The protein is S-adenosylmethionine:tRNA ribosyltransferase-isomerase of Syntrophomonas wolfei subsp. wolfei (strain DSM 2245B / Goettingen).